The chain runs to 234 residues: MEFTPPLQQGILLRRYKRFLADVQLSDGSEITLHCPNTGSMRNCLYPGETVWFSTSDNPKRKYAHTWELMTTPDAGLIGIHSGQANTLAEEAINKGIIKELTGYDSLSREVKYGDENSRIDILLQGAQKPACYIEVKSCTLLEDGQGYFPDAVSLRGQKHLRELMHMVSQGHRAVLLFVVQHSDIFSVAPAAHIDPEYAKLLKKAVLAGVEVLAYRCEMSPTEIHLAQACVVRV.

The protein belongs to the SfsA family.

The chain is Sugar fermentation stimulation protein homolog from Shewanella baltica (strain OS223).